The sequence spans 87 residues: Small ribosomal subunit protein bS16 (87 aa).

It belongs to the bacterial ribosomal protein bS16 family.

This Fusobacterium nucleatum subsp. nucleatum (strain ATCC 25586 / DSM 15643 / BCRC 10681 / CIP 101130 / JCM 8532 / KCTC 2640 / LMG 13131 / VPI 4355) protein is Small ribosomal subunit protein bS16.